A 103-amino-acid polypeptide reads, in one-letter code: MYAIVRTGGKQYQVACGDQLRVEKLEGNVGDSLDLTDVLMLVDGDNVQVGQPVLENAKVVAKIAEQGRGKKIIIFKKKRRKGYRLKQGHRQSYTALKIEEISA.

This sequence belongs to the bacterial ribosomal protein bL21 family. In terms of assembly, part of the 50S ribosomal subunit. Contacts protein L20.

Its function is as follows. This protein binds to 23S rRNA in the presence of protein L20. The protein is Large ribosomal subunit protein bL21 of Desulfotalea psychrophila (strain LSv54 / DSM 12343).